The chain runs to 159 residues: Probable deoxyuridine 5'-triphosphate nucleotidohydrolase (159 aa).

It belongs to the dCTP deaminase family. Archaeal dUTPase subfamily.

The catalysed reaction is dUTP + H2O = dUMP + diphosphate + H(+). It functions in the pathway pyrimidine metabolism; dUMP biosynthesis; dUMP from dCTP (dUTP route): step 2/2. In terms of biological role, this enzyme is involved in nucleotide metabolism: it produces dUMP, the immediate precursor of thymidine nucleotides and it decreases the intracellular concentration of dUTP so that uracil cannot be incorporated into DNA. In Aeropyrum pernix (strain ATCC 700893 / DSM 11879 / JCM 9820 / NBRC 100138 / K1), this protein is Probable deoxyuridine 5'-triphosphate nucleotidohydrolase.